The sequence spans 215 residues: uncharacterized protein (215 aa).

This sequence belongs to the mimivirus L31/R44 family.

This is an uncharacterized protein from Acanthamoeba polyphaga (Amoeba).